A 456-amino-acid chain; its full sequence is Anthocyanidin 3-O-galactosyltransferase F3GT1 (456 aa).

An anthocyanidin contacts are provided by Ser-20, His-22, and Gln-83. His-22 (proton acceptor) is an active-site residue. Catalysis depends on Asp-118, which acts as the Charge relay. Residue His-150 coordinates an anthocyanidin. UDP contacts are provided by Ser-281, Trp-333, Ala-334, His-351, Asn-355, Ser-356, and Glu-359. Gly-374 serves as a coordination point for an anthocyanidin.

It belongs to the UDP-glycosyltransferase family. Expressed at low levels in stems and leaves. Expressed in ovaries.

It catalyses the reaction cyanidin + UDP-alpha-D-galactose = cyanidin 3-O-beta-D-galactoside + UDP + H(+). It participates in pigment biosynthesis; anthocyanin biosynthesis. Functionally, involved in anthocyanin biosynthesis by catalyzing the galactosylation of cyanidin. Required for the accumulation of anthocyanin in red-fleshed kiwifruit varieties. Seems to be the key enzyme regulating the accumulation of anthocyanin in red-fleshed kiwi fruits. In Actinidia chinensis var. chinensis (Chinese soft-hair kiwi), this protein is Anthocyanidin 3-O-galactosyltransferase F3GT1.